Here is a 364-residue protein sequence, read N- to C-terminus: Solute carrier family 35 member C2 (364 aa).

2 helical membrane passes run 14 to 34 (AALT…ITFY) and 42 to 62 (FHFP…FSAL). N-linked (GlcNAc...) asparagine glycosylation occurs at N102. The next 7 helical transmembrane spans lie at 104 to 124 (SFLY…VLFI), 136 to 156 (LRAA…MFTY), 166 to 186 (FALV…TQIL), 202 to 222 (FHLQ…FEGL), 238 to 258 (LLLW…GLGF), 272 to 292 (LSIA…HLLG), and 295 to 315 (ISLL…LHVA). Phosphoserine occurs at positions 335 and 336.

It belongs to the TPT transporter family. SLC35C subfamily.

The protein resides in the golgi apparatus. It localises to the cis-Golgi network membrane. The protein localises to the endoplasmic reticulum-Golgi intermediate compartment membrane. In terms of biological role, may play an important role in the cellular response to tissue hypoxia. May be either a GDP-fucose transporter that competes with SLC35C1 for GDP-fucose, or a factor that otherwise enhances the fucosylation of Notch and is required for optimal Notch signaling in mammalian cells. The chain is Solute carrier family 35 member C2 (Slc35c2) from Mus musculus (Mouse).